A 616-amino-acid chain; its full sequence is Proline--tRNA ligase (616 aa).

The protein belongs to the class-II aminoacyl-tRNA synthetase family. ProS type 1 subfamily. As to quaternary structure, homodimer.

It localises to the cytoplasm. It carries out the reaction tRNA(Pro) + L-proline + ATP = L-prolyl-tRNA(Pro) + AMP + diphosphate. In terms of biological role, catalyzes the attachment of proline to tRNA(Pro) in a two-step reaction: proline is first activated by ATP to form Pro-AMP and then transferred to the acceptor end of tRNA(Pro). As ProRS can inadvertently accommodate and process non-cognate amino acids such as alanine and cysteine, to avoid such errors it has two additional distinct editing activities against alanine. One activity is designated as 'pretransfer' editing and involves the tRNA(Pro)-independent hydrolysis of activated Ala-AMP. The other activity is designated 'posttransfer' editing and involves deacylation of mischarged Ala-tRNA(Pro). The misacylated Cys-tRNA(Pro) is not edited by ProRS. The polypeptide is Proline--tRNA ligase (Lactococcus lactis subsp. cremoris (strain SK11)).